The following is an 816-amino-acid chain: H(+)/Cl(-) exchange transporter 5 (816 aa).

Residues 1–124 (MAMWQGAMDN…WALIHSVSDA (124 aa)) are Cytoplasmic-facing. A run of 2 helical transmembrane segments spans residues 125–162 (FSGW…ICTG) and 208–231 (VNYF…VKAF). Residues 237–241 (GSGIP) carry the Selectivity filter part_1 motif. Chloride is bound at residue Ser238. An intramembrane region (helical) is located at residues 240-247 (IPEIKTIL). A run of 2 helical transmembrane segments spans residues 256-275 (LGKW…VSSG) and 281-300 (EGPL…HCFN). A Selectivity filter part_2 motif is present at residues 279-283 (GKEGP). 2 intramembrane regions (helical) span residues 312-324 (VLSA…VSVA) and 328-336 (PIGGVLFSL). 5 consecutive transmembrane segments (helical) span residues 348–366 (LWRS…RSIN), 389–414 (LVPF…IAWC), 422–442 (LGKY…ILAF), 498–518 (MWQL…TFGM), and 523–542 (GLFI…LGVG). The short motif at 523-527 (GLFIP) is the Selectivity filter part_3 element. Phe525 contacts chloride. Residues 570–584 (GLYAMVGAAACLGGV) constitute an intramembrane region (helical). Residues 585 to 587 (TRM) constitute an intramembrane region (note=Loop between two helices). Positions 588 to 599 (TVSLVVIMFELT) form an intramembrane region, helical. An intramembrane region (note=Loop between two helices) is located at residues 600–604 (GGLEY). The helical transmembrane segment at 605–622 (IVPLMAAAMTSKWVADAL) threads the bilayer. At 623-816 (GREGIYDAHI…NQDPDSILFN (194 aa)) the chain is on the cytoplasmic side. Tyr628 provides a ligand contact to chloride. 2 consecutive CBS domains span residues 656 to 720 (MKPR…ARKK) and 752 to 812 (ILDL…DPDS). Residues Thr666, 687 to 689 (YSG), and 794 to 797 (TKKD) contribute to the ATP site.

It belongs to the chloride channel (TC 2.A.49) family. ClC-5/CLCN5 subfamily. In terms of assembly, interacts with NEDD4 and NEDD4L. Ubiquitinated by NEDD4L in the presence of albumin; which promotes endocytosis and proteasomal degradation. Kidney specific.

It is found in the golgi apparatus membrane. Its subcellular location is the endosome membrane. It localises to the cell membrane. The catalysed reaction is 2 chloride(in) + H(+)(out) = 2 chloride(out) + H(+)(in). Its function is as follows. Proton-coupled chloride transporter. Functions as antiport system and exchanges chloride ions against protons. Important for normal acidification of the endosome lumen. May play an important role in renal tubular function. The CLC channel family contains both chloride channels and proton-coupled anion transporters that exchange chloride or another anion for protons. The absence of conserved gating glutamate residues is typical for family members that function as channels. The protein is H(+)/Cl(-) exchange transporter 5 (Clcn5) of Mus musculus (Mouse).